The sequence spans 115 residues: Histidine-rich carboxyl terminus protein 1 (115 aa).

The chain crosses the membrane as a helical span at residues 9–29 (ALVGWITGAAVAVLLLLLLLA). Residues 86-115 (GLHHHHHPRHTPHHLHHHHHPHRHHPRHAR) are disordered. Positions 87–115 (LHHHHHPRHTPHHLHHHHHPHRHHPRHAR) are enriched in basic residues.

Its subcellular location is the membrane. The polypeptide is Histidine-rich carboxyl terminus protein 1 (HRCT1) (Homo sapiens (Human)).